Reading from the N-terminus, the 313-residue chain is D-alanine--D-alanine ligase (313 aa).

The 201-residue stretch at 108-308 folds into the ATP-grasp domain; it reads KLVWQQTGVP…YSELVVKVLS (201 aa). 138–193 lines the ATP pocket; it reads VAKLGLPLFVKPASEGSSVAVLKVKTADALPAALSEAATHDKIVIVEKSIEGGGEY. Mg(2+) is bound by residues D262, E275, and N277.

The protein belongs to the D-alanine--D-alanine ligase family. The cofactor is Mg(2+). Mn(2+) serves as cofactor.

The protein localises to the cytoplasm. It catalyses the reaction 2 D-alanine + ATP = D-alanyl-D-alanine + ADP + phosphate + H(+). Its pathway is cell wall biogenesis; peptidoglycan biosynthesis. In terms of biological role, cell wall formation. The protein is D-alanine--D-alanine ligase of Burkholderia ambifaria (strain MC40-6).